The chain runs to 1005 residues: Beta/gamma crystallin domain-containing protein 3 (1005 aa).

Residues serine 122, serine 129, serine 130, serine 136, and serine 140 each carry the phosphoserine modification. Disordered regions lie at residues 132 to 159 (EDVLSSEVSPGHHGSSKSRESANQPSSV) and 173 to 198 (NFDGDDRQEAEEEEEEAVASGKDWRT). Residues 180–189 (QEAEEEEEEA) are compositionally biased toward acidic residues. 9 consecutive Beta/gamma crystallin 'Greek key' domains span residues 367–416 (GCWI…KRVL), 462–500 (GVWLAYPDIHFKGQATILEEDQGLFEISAAEMKSLHPLQ), 512–556 (LKVI…RVIG), 557–599 (GVWV…RYLQ), 605–647 (SSIT…HVKS), 648–690 (GVWV…RPIQ), 701–737 (HLLKAFSKAGFQGECIDFVKECADLTSFTPASFKVLR), 738–781 (GCWL…QPID), and 828–869 (GLWI…RPMK). Residues 871-1003 (PAVYIRIRNR…GEETQKWDIE (133 aa)) enclose the Ricin B-type lectin domain.

This sequence belongs to the beta/gamma-crystallin family.

The sequence is that of Beta/gamma crystallin domain-containing protein 3 (Crybg3) from Mus musculus (Mouse).